The chain runs to 576 residues: Mycobactin import ATP-binding/permease protein IrtB (576 aa).

The Cytoplasmic portion of the chain corresponds to 1–25 (MIRTLIALVPADKRGTLGLYTVLTV). One can recognise an ABC transmembrane type-1 domain in the interval 19–299 (LYTVLTVLSV…LSELTPAIES (281 aa)). Residues 26–46 (LSVVIRAAGTVLLVPLVAALF) traverse the membrane as a helical segment. Residues 47–52 (GDTPQD) are Periplasmic-facing. Residues 53–73 (AWPWLGWLTAATAAGWIVDTT) traverse the membrane as a helical segment. Residues 74-131 (TSRLGFDLGFAVLDHTQHDVADRMPNIRLDWLTAENTATARAAIASTGPELVGLVVNL) are Cytoplasmic-facing. Transmembrane regions (helical) follow at residues 132-152 (LTPL…LVAV) and 153-173 (SPPL…AMWA). The Cytoplasmic portion of the chain corresponds to 174–241 (SNRLSRKADT…RLLAMQIPGQ (68 aa)). Residues 242 to 262 (LLFSLASQLALILLAGMATWL) form a helical membrane-spanning segment. At 263-267 (TVRGE) the chain is on the periplasmic side. Residues 268–288 (LSVPEAVAMIVVVARYLEPFT) form a helical membrane-spanning segment. Topologically, residues 289–576 (SLSELTPAIE…HEAADWQITH (288 aa)) are cytoplasmic. In terms of domain architecture, ABC transporter spans 332–565 (IEFDCVTFGY…GGRFDEFWRR (234 aa)). 364–371 (GPSGSGKS) provides a ligand contact to ATP.

Belongs to the ABC transporter superfamily. Siderophore-Fe(3+) uptake transporter (SIUT) (TC 3.A.1.21) family. As to quaternary structure, forms a heterodimer with IrtA.

The protein localises to the cell inner membrane. In terms of biological role, part of the ABC transporter complex IrtAB involved in the import of iron-bound mycobactin (Fe-MBT) and carboxymycobactin (Fe-cMBT). Has a preference for Fe-MBT over Fe-cMBT. Transmembrane domains (TMD) form a pore in the membrane and the ATP-binding domain (NBD) is responsible for energy generation. The chain is Mycobactin import ATP-binding/permease protein IrtB from Mycolicibacterium smegmatis (strain ATCC 700084 / mc(2)155) (Mycobacterium smegmatis).